Reading from the N-terminus, the 412-residue chain is Maintenance of mitochondrial morphology protein 1 (412 aa).

Topologically, residues 1-81 (MTKELIKTEA…PANNWTFTQG (81 aa)) are lumenal. Residues 82–102 (LVLGQISVIFIIIVFVKFFVF) form a helical membrane-spanning segment. The Cytoplasmic segment spans residues 103–412 (ADSSTIPTKK…RSDSGTSENL (310 aa)). Residues 165-382 (SPESLDWFNV…EPRFQVVRLP (218 aa)) form the SMP-LTD domain. The disordered stretch occupies residues 389-412 (KNTREPINKKTSVSRSDSGTSENL). Over residues 397–412 (KKTSVSRSDSGTSENL) the composition is skewed to polar residues.

The protein belongs to the MMM1 family. As to quaternary structure, homodimer. Component of the ER-mitochondria encounter structure (ERMES) or MDM complex, composed of MMM1, MDM10, MDM12 and MDM34. An MMM1 homodimer associates with one molecule of MDM12 on each side in a pairwise head-to-tail manner, and the SMP-LTD domains of MMM1 and MDM12 generate a continuous hydrophobic tunnel for phospholipid trafficking.

It is found in the endoplasmic reticulum membrane. Component of the ERMES/MDM complex, which serves as a molecular tether to connect the endoplasmic reticulum (ER) and mitochondria. Components of this complex are involved in the control of mitochondrial shape and protein biogenesis, and function in nonvesicular lipid trafficking between the ER and mitochondria. The MDM12-MMM1 subcomplex functions in the major beta-barrel assembly pathway that is responsible for biogenesis of all outer membrane beta-barrel proteins, and acts in a late step after the SAM complex. The MDM10-MDM12-MMM1 subcomplex further acts in the TOM40-specific pathway after the action of the MDM12-MMM1 complex. Essential for establishing and maintaining the structure of mitochondria and maintenance of mtDNA nucleoids. This is Maintenance of mitochondrial morphology protein 1 from Candida tropicalis (strain ATCC MYA-3404 / T1) (Yeast).